The chain runs to 597 residues: C4b-binding protein alpha chain (597 aa).

The first 48 residues, 1–48 (MHPPKTPSGALHRKRKMAAWPFSRLWKVSDPILFQMTLIAALLPAVLG), serve as a signal peptide directing secretion. Sushi domains are found at residues 49 to 110 (NCGP…FCIY), 111 to 172 (KRCR…QCEI), 173 to 236 (VKCK…TCEK), 237 to 296 (ITCR…ACEP), 297 to 362 (NSCI…GCEA), 363 to 424 (LCCP…SCGD), 425 to 482 (ICNF…QCKA), and 483 to 540 (LCRK…KCEW). 16 disulfide bridges follow: cysteine 50-cysteine 96, cysteine 81-cysteine 108, cysteine 113-cysteine 154, cysteine 140-cysteine 170, cysteine 175-cysteine 217, cysteine 203-cysteine 234, cysteine 239-cysteine 281, cysteine 267-cysteine 294, cysteine 299-cysteine 348, cysteine 332-cysteine 360, cysteine 365-cysteine 409, cysteine 399-cysteine 422, cysteine 426-cysteine 468, cysteine 454-cysteine 480, cysteine 484-cysteine 525, and cysteine 511-cysteine 538. Asparagine 221 carries an N-linked (GlcNAc...) asparagine glycan. 2 N-linked (GlcNAc...) asparagine glycosylation sites follow: asparagine 506 and asparagine 528.

In terms of assembly, disulfide-linked complex of alpha and beta chains of 3 possible sorts: a 570 kDa complex of 7 alpha chains and 1 beta chain, a 530 kDa homoheptamer of alpha chains or a 500 kDa complex of 6 alpha chains and 1 beta chain. The central body of the alpha chain homomer supports tentacles, each with the binding site for C4b at the end. (Microbial infection) Interacts with Staphylococcus aureus protein SdrE; this interaction inhibits complement-mediated bacterial opsonization. Chylomicrons in the plasma.

The protein resides in the secreted. Its function is as follows. Controls the classical pathway of complement activation. It binds as a cofactor to C3b/C4b inactivator (C3bINA), which then hydrolyzes the complement fragment C4b. It also accelerates the degradation of the C4bC2a complex (C3 convertase) by dissociating the complement fragment C2a. Alpha chain binds C4b. It also interacts with anticoagulant protein S and with serum amyloid P component. The sequence is that of C4b-binding protein alpha chain (C4BPA) from Homo sapiens (Human).